The sequence spans 305 residues: C alpha-dehydrogenase (305 aa).

10 to 34 (FITGGASGAGFGQAKVFGQAGAKIV) contacts NAD(+). A substrate-binding site is contributed by Ser-144. The active-site Proton acceptor is the Tyr-157.

It belongs to the short-chain dehydrogenases/reductases (SDR) family.

It functions in the pathway secondary metabolite metabolism; lignin degradation. Functionally, catalyzes the C alpha dehydrogenation of arylglycerol-beta-aryl ether (C alpha alcohol type) (compound IV). This chain is C alpha-dehydrogenase (ligD), found in Sphingobium sp. (strain NBRC 103272 / SYK-6).